The sequence spans 88 residues: Monensin polyketide synthase acyl carrier protein (88 aa).

The 78-residue stretch at proline 5–leucine 82 folds into the Carrier domain. O-(pantetheine 4'-phosphoryl)serine is present on serine 42.

4'-phosphopantetheine is transferred from CoA to a specific serine of the apo-ACP-like protein.

The protein operates within antifungal biosynthesis; monensin biosynthesis. Acyl carrier protein. This chain is Monensin polyketide synthase acyl carrier protein, found in Streptomyces virginiae (Streptomyces cinnamonensis).